Consider the following 447-residue polypeptide: Mannose/glucose-specific lectin (447 aa).

Repeat copies occupy residues 1-149 (SLKG…VQPV), 150-295 (PHGT…VKPR), and 296-447 (DVEG…DTAV). The segment at 1-447 (SLKGMISVGP…GIFVKPDTAV (447 aa)) is 3 X approximate tandem repeats. 3 Jacalin-type lectin domains span residues 5–148 (MISV…FVQP), 153–294 (TISF…YVKP), and 300–443 (SISI…FVKP).

The protein belongs to the jacalin lectin family. In terms of assembly, homodimer. In terms of processing, the N-terminus is blocked.

Functionally, mannose/glucose specific lectin. Shows agglutinating activity against rabbit erythrocytes. This is Mannose/glucose-specific lectin from Parkia platycephala.